The primary structure comprises 335 residues: MNTEATHDQNEALTTGARLRNAREQLGLSQQAVAERLCLKVSTVRDIEEDKAPADLASTFLRGYIRSYARLVHIPEEELQPGLEKQAPLRAAKVAPMQSFSLGKRRKKRDGWLMTFTWLVLFVVIGLSGAWWWQDHKAQQEEITTMADQSSAELNNNQSQSVPLDTSTTTDQAMATTPTSPVDTTATNTQTPAVTAPAPAVDPQQNAVVPPSQANVDTAATPAPAATTTPDGAAPLPTDQAGVTTPAVDPNALVMNFTADCWLEVTDATGKKLFSGMQRKDGNLNLTGQAPYKLKIGAPAAVQIQYQGKPVDLSRFIRTNQVARLTLNAEQSPAQ.

The Cytoplasmic portion of the chain corresponds to 1–111; it reads MNTEATHDQN…LGKRRKKRDG (111 aa). The HTH cro/C1-type domain maps to 19–71; that stretch reads LRNAREQLGLSQQAVAERLCLKVSTVRDIEEDKAPADLASTFLRGYIRSYARL. The H-T-H motif DNA-binding region spans 30–49; it reads QQAVAERLCLKVSTVRDIEE. A helical; Signal-anchor for type II membrane protein membrane pass occupies residues 112–132; the sequence is WLMTFTWLVLFVVIGLSGAWW. Topologically, residues 133 to 335 are periplasmic; the sequence is WQDHKAQQEE…TLNAEQSPAQ (203 aa). Polar residues predominate over residues 148-164; it reads DQSSAELNNNQSQSVPL. The interval 148–239 is disordered; it reads DQSSAELNNN…PDGAAPLPTD (92 aa). Composition is skewed to low complexity over residues 165–205 and 217–239; these read DTST…DPQQ and DTAATPAPAATTTPDGAAPLPTD.

Belongs to the RodZ family.

It localises to the cell inner membrane. Functionally, cytoskeletal protein that is involved in cell-shape control through regulation of the length of the long axis. The protein is Cytoskeleton protein RodZ of Escherichia coli O6:K15:H31 (strain 536 / UPEC).